Consider the following 348-residue polypeptide: Rhodopsin (348 aa).

An N-acetylmethionine modification is found at M1. Residues 1 to 36 (MNGTEGPNFYVPFSNKTGVVRSPFEYPQYYLAEPWQ) lie on the Extracellular side of the membrane. N-linked (GlcNAc...) asparagine glycans are attached at residues N2 and N15. A helical transmembrane segment spans residues 37–61 (FSMLAAYMFLLIVLGFPINFLTLYV). The Cytoplasmic segment spans residues 62–73 (TVQHKKLRTPLN). The helical transmembrane segment at 74 to 96 (YILLNLAVADLFMVFGGFTTTLY) threads the bilayer. Over 97–110 (TSLHGYFVFGPTGC) the chain is Extracellular. C110 and C187 form a disulfide bridge. A helical membrane pass occupies residues 111 to 133 (NLEGFFATLGGEIALWSLVVLAI). Residues 134 to 136 (ERY) carry the 'Ionic lock' involved in activated form stabilization motif. The Cytoplasmic portion of the chain corresponds to 134 to 152 (ERYVVVCKPMSNFRFGENH). The helical transmembrane segment at 153 to 173 (AIMGVAFTWVMALACAAPPLV) threads the bilayer. Residues 174–202 (GWSRYIPEGMQCSCGIDYYTLKPEVNNES) lie on the Extracellular side of the membrane. E201 is a Zn(2+) binding site. Residues 203 to 224 (FVIYMFVVHFTIPMIVIFFCYG) form a helical membrane-spanning segment. Over 225-252 (QLVFTVKEAAAQQQESATTQKAEKEVTR) the chain is Cytoplasmic. The helical transmembrane segment at 253–274 (MVIIMVIAFLICWVPYASVAFY) threads the bilayer. The Extracellular segment spans residues 275–286 (IFTHQGSNFGPI). Position 279 (Q279) interacts with Zn(2+). A helical transmembrane segment spans residues 287–308 (FMTLPAFFAKSSSIYNPVIYIM). At K296 the chain carries N6-(retinylidene)lysine. Topologically, residues 309 to 348 (MNKQFRNCMLTTLCCGKNPLGDDEASTTGSKTETSQVAPA) are cytoplasmic. S-palmitoyl cysteine attachment occurs at residues C322 and C323. An interaction with SAG region spans residues 330–348 (DDEASTTGSKTETSQVAPA). S334 bears the Phosphoserine mark. A phosphothreonine mark is found at T335 and T336. S338 is modified (phosphoserine). Phosphothreonine is present on residues T340 and T342. At S343 the chain carries Phosphoserine.

The protein belongs to the G-protein coupled receptor 1 family. Opsin subfamily. Homodimer. May form a complex composed of RHO, GRK1 and RCVRN in a Ca(2+)-dependent manner; RCVRN prevents the interaction between GRK1 and RHO. Interacts with GRK1. Interacts (phosphorylated form) with SAG. Interacts with GNAT1. Interacts with GNAT3. SAG and G-proteins compete for a common binding site. Interacts with PRCD; the interaction promotes PRCD stability. Forms a complex with ASAP1 and ARF4. Forms a complex with ASAP1, RAB11A, Rabin8/RAB3IP, ARF4 and RAB11FIP3; the complex regulates Golgi-to-cilia rhodopsin/RHO transport in photoreceptors. Post-translationally, phosphorylated on some or all of the serine and threonine residues present in the C-terminal region. In terms of processing, contains one covalently linked retinal chromophore. Upon light absorption, the covalently bound 11-cis-retinal is converted to all-trans-retinal. After hydrolysis of the Schiff base and release of the covalently bound all-trans-retinal, active rhodopsin is regenerated by binding of a fresh molecule of 11-cis-retinal.

Its subcellular location is the membrane. It localises to the cell projection. The protein resides in the cilium. The protein localises to the photoreceptor outer segment. Its function is as follows. Photoreceptor required for image-forming vision at low light intensity. Required for photoreceptor cell viability after birth. Light-induced isomerization of 11-cis to all-trans retinal triggers a conformational change that activates signaling via G-proteins. Subsequent receptor phosphorylation mediates displacement of the bound G-protein alpha subunit by the arrestin SAG and terminates signaling. The chain is Rhodopsin (RHO) from Felis catus (Cat).